Reading from the N-terminus, the 305-residue chain is Glycine--tRNA ligase alpha subunit (305 aa).

This sequence belongs to the class-II aminoacyl-tRNA synthetase family. As to quaternary structure, tetramer of two alpha and two beta subunits.

It localises to the cytoplasm. It carries out the reaction tRNA(Gly) + glycine + ATP = glycyl-tRNA(Gly) + AMP + diphosphate. This Streptococcus suis (strain 05ZYH33) protein is Glycine--tRNA ligase alpha subunit.